The following is a 196-amino-acid chain: SPRY domain-containing protein 7 (196 aa).

At Ala-2 the chain carries N-acetylalanine. Residues 2–184 (AASVFCCLRC…FSEFYHTPPP (183 aa)) enclose the B30.2/SPRY domain.

This Bos taurus (Bovine) protein is SPRY domain-containing protein 7 (SPRYD7).